Consider the following 712-residue polypeptide: Polyribonucleotide nucleotidyltransferase (712 aa).

Positions 487 and 493 each coordinate Mg(2+). The 60-residue stretch at 554–613 folds into the KH domain; that stretch reads PKIITMTINPDKIRDVIGPSGKQINKIIEETGVKIDIEQDGTVFISSINQEMNDKAKKII. The region spanning 623–691 is the S1 motif domain; that stretch reads GEIYEGKVKR…KQGRVNLSRK (69 aa).

It belongs to the polyribonucleotide nucleotidyltransferase family. The cofactor is Mg(2+).

It is found in the cytoplasm. It catalyses the reaction RNA(n+1) + phosphate = RNA(n) + a ribonucleoside 5'-diphosphate. Functionally, involved in mRNA degradation. Catalyzes the phosphorolysis of single-stranded polyribonucleotides processively in the 3'- to 5'-direction. This is Polyribonucleotide nucleotidyltransferase from Bacillus cereus (strain G9842).